Reading from the N-terminus, the 225-residue chain is UPF0758 protein Sfri_3828 (225 aa).

An MPN domain is found at 102-224; it reads ILTNPDLTRD…IVSFAERGWI (123 aa). Zn(2+)-binding residues include histidine 173, histidine 175, and aspartate 186. The JAMM motif signature appears at 173–186; the sequence is HNHPSGIAEPSQAD.

Belongs to the UPF0758 family.

The chain is UPF0758 protein Sfri_3828 from Shewanella frigidimarina (strain NCIMB 400).